Reading from the N-terminus, the 206-residue chain is Adenine phosphoribosyltransferase (206 aa).

It belongs to the purine/pyrimidine phosphoribosyltransferase family. As to quaternary structure, homodimer.

Its subcellular location is the cytoplasm. The catalysed reaction is AMP + diphosphate = 5-phospho-alpha-D-ribose 1-diphosphate + adenine. It functions in the pathway purine metabolism; AMP biosynthesis via salvage pathway; AMP from adenine: step 1/1. Catalyzes a salvage reaction resulting in the formation of AMP, that is energically less costly than de novo synthesis. The sequence is that of Adenine phosphoribosyltransferase from Rhodopirellula baltica (strain DSM 10527 / NCIMB 13988 / SH1).